A 133-amino-acid polypeptide reads, in one-letter code: CCSKFGYCGLTDAYNFYTGQLTSFAHVTHETGNNAYCDPSKTQKPCAAGKKYYGRGPIQISXNYNYGPAGRAIGMDGLGNPDRVAQDALDDYKTALXFLVNGEEAVPGLSAANAVSYYRQYCQQLGVDPGPNL.

The active-site Proton donor is Glu-30.

This sequence belongs to the glycosyl hydrolase 19 family. Chitinase class I subfamily.

The enzyme catalyses Random endo-hydrolysis of N-acetyl-beta-D-glucosaminide (1-&gt;4)-beta-linkages in chitin and chitodextrins.. Functionally, this protein functions both as an alpha-amylase inhibitor and as a chitinase. The sequence is that of Alpha-amylase inhibitor/endochitinase from Coix lacryma-jobi (Job's tears).